The chain runs to 123 residues: Small ribosomal subunit protein uS12 (123 aa).

Asp89 carries the 3-methylthioaspartic acid modification. Residues 100–123 (GSLDTSGVKGRNQGRSKYGTKRPK) are disordered. The span at 111–123 (NQGRSKYGTKRPK) shows a compositional bias: basic residues.

It belongs to the universal ribosomal protein uS12 family. Part of the 30S ribosomal subunit. Contacts proteins S8 and S17. May interact with IF1 in the 30S initiation complex.

Functionally, with S4 and S5 plays an important role in translational accuracy. Interacts with and stabilizes bases of the 16S rRNA that are involved in tRNA selection in the A site and with the mRNA backbone. Located at the interface of the 30S and 50S subunits, it traverses the body of the 30S subunit contacting proteins on the other side and probably holding the rRNA structure together. The combined cluster of proteins S8, S12 and S17 appears to hold together the shoulder and platform of the 30S subunit. In Pseudomonas fluorescens (strain ATCC BAA-477 / NRRL B-23932 / Pf-5), this protein is Small ribosomal subunit protein uS12.